Reading from the N-terminus, the 258-residue chain is Imidazole glycerol phosphate synthase subunit HisF (258 aa).

Active-site residues include Asp11 and Asp130.

It belongs to the HisA/HisF family. Heterodimer of HisH and HisF.

It localises to the cytoplasm. The catalysed reaction is 5-[(5-phospho-1-deoxy-D-ribulos-1-ylimino)methylamino]-1-(5-phospho-beta-D-ribosyl)imidazole-4-carboxamide + L-glutamine = D-erythro-1-(imidazol-4-yl)glycerol 3-phosphate + 5-amino-1-(5-phospho-beta-D-ribosyl)imidazole-4-carboxamide + L-glutamate + H(+). It participates in amino-acid biosynthesis; L-histidine biosynthesis; L-histidine from 5-phospho-alpha-D-ribose 1-diphosphate: step 5/9. Functionally, IGPS catalyzes the conversion of PRFAR and glutamine to IGP, AICAR and glutamate. The HisF subunit catalyzes the cyclization activity that produces IGP and AICAR from PRFAR using the ammonia provided by the HisH subunit. This is Imidazole glycerol phosphate synthase subunit HisF from Yersinia pseudotuberculosis serotype O:1b (strain IP 31758).